A 459-amino-acid polypeptide reads, in one-letter code: MPPTISDDTTVRSFTCAQPLGRAGYELIIRQMLHRFLSDLHTTKALLDRSLQATVNHAAGPVRSLLTIITVGFYTLLNWCSLGSYHTTKMISTVVTGLLLLASGCEALPTNQTPLPGKWSTLPNITLNGVEYPRQEHAAALVGDEIFVLGGILPWDGKEYATTNIVQKYNMITGTWTETAPMPAALNHANVAVVDGKIYYLGGLEAVDETYWNATGKSAVYDPATDEWTVLPSMPEGREIGSAATVVVDDTIYLPGGLAYTNITYDQEGTVSRFSSYNVRTQEWTTLPDLPAPRDHAGKGIYRDMLYILGGREFGNKNVVSTVFGFNLTSQQWATAFEPMPIARGGVASATIGSLIFTAGGEGDRRTPTAVFPEMQAYDAATNTWVDYADMPLPVHGSDAVVYKGEIVIPGGGIVTGATLTPVVQTFQPPLPDSGEKSMPLMVMVYRVVFDLPWMLFKR.

Kelch repeat units lie at residues 92–144 (STVV…LVGD), 145–196 (EIFV…VVDG), 198–248 (IYYL…TVVV), 251–304 (TIYL…IYRD), 306–354 (LYIL…TIGS), and 355–405 (LIFT…VYKG).

It participates in secondary metabolite biosynthesis. Functionally, kelch-like protein; part of the gene cluster that mediates the biosynthesis of terrein, a fungal metabolite with ecological, antimicrobial, antiproliferative, and antioxidative activities. The first step in the pathway is performed by the polyketide synthase terA that produces 4-hydroxy-6-methylpyranon (4-HMP), orsellinic acid (OA), and 2,3-dehydro-6-hydroxymellein (2,3-dehydro-6-HM) by condensing acetyl-CoA with two, three, or four malonyl-CoA units, respectively. 4-HMP and OA are not pathway intermediates, but are rather shunt or side products. 2,3-dehydro-6-HM is further converted to 6-hydroxymellein (6-HM) by the 6-hydroxymellein synthase terB. The monooxygenases terC and terD, the multicopper oxidase terE and the Kelch-like protein terF are then involved in the transformation of 6-HM to terrein. Even if they are co-regulated with the other terrein cluster genes, terH and terI seem to be dispensable for terrein production; whereas one or both of the 2 transporters terG and terJ are probably required for efficient secretion of metabolites. This is Kelch-like protein terF from Aspergillus terreus (strain NIH 2624 / FGSC A1156).